A 329-amino-acid chain; its full sequence is SLAM family member 5 (329 aa).

Positions 1–21 (MAQRHLWIWFLCLQTWSEAAG) are cleaved as a signal peptide. The Extracellular segment spans residues 22–221 (KDADPMVMNG…TPSFHPRHAV (200 aa)). The region spanning 26-129 (PMVMNGILGE…IYYLHIYRRL (104 aa)) is the Ig-like V-type domain. Residues 132-206 (PKITQSLISS…SNSSDSVTVQ (75 aa)) form the Ig-like C2-type domain. An N-linked (GlcNAc...) asparagine glycan is attached at Asn147. A disulfide bridge connects residues Cys152 and Cys190. Residues 222–242 (LPGGLAVLFLLILIPMLAFLF) traverse the membrane as a helical segment. Residues 243 to 329 (RLYKRRRDRI…PKALGNEIVV (87 aa)) are Cytoplasmic-facing. Residues 263 to 268 (TVYAVV) carry the ITSM 1 motif. Tyr265 carries the post-translational modification Phosphotyrosine. Tyr280 carries the phosphotyrosine; by LYN modification. Positions 298-303 (TIYSSV) match the ITSM 2 motif. The residue at position 300 (Tyr300) is a Phosphotyrosine.

Homodimer; via its extracellular domain. Forms a head to tail dimer with a CD48 molecule from another cell. Interacts with SH2 domain-containing proteins SH2D1A/SAP and SH2D1B/EAT-2. Interacts with tyrosine-protein phosphatases PTPN6/SHP-1 and PTPN11/SHP-2 via its phosphorylated cytoplasmic domain, and this interaction is blocked by SH2D1A. Phosphorylated by tyrosine-protein kinase LCK on tyrosine residues following ligation induced by agonist monoclonal antibody. The association with SH2D1A/SAP is dependent of tyrosine phosphorylation of its cytoplasmic domain. Phosphorylated on Tyr-280 and Tyr-300 following platelet aggregation. Phosphorylated on tyrosine residues upon high affinity immunoglobulin epsilon receptor aggregation in mast cells. Post-translationally, N-glycosylated. Predominantly expressed in hematopoietic tissues such as lymph node, spleen, thymus, and bone marrow. Detected also in lung.

It localises to the cell membrane. Its function is as follows. Self-ligand receptor of the signaling lymphocytic activation molecule (SLAM) family. SLAM receptors triggered by homo- or heterotypic cell-cell interactions are modulating the activation and differentiation of a wide variety of immune cells and thus are involved in the regulation and interconnection of both innate and adaptive immune response. Activities are controlled by presence or absence of small cytoplasmic adapter proteins, SH2D1A/SAP and/or SH2D1B/EAT-2. Can mediate natural killer (NK) cell cytotoxicity dependent on SH2D1A and SH2D1B. Increases proliferative responses of activated T-cells and SH2D1A/SAP does not seen be required for this process. Homophilic interactions enhance interferon gamma/IFNG secretion in lymphocytes and induce platelet stimulation via a SH2D1A/SAP-dependent pathway. May serve as a marker for hematopoietic progenitor cells. Required for a prolonged T-cell:B-cell contact, optimal T follicular helper function, and germinal center formation. In germinal centers involved in maintaining B cell tolerance and in preventing autoimmunity. In mast cells negatively regulates high affinity immunoglobulin epsilon receptor signaling; independent of SH2D1A and SH2D1B but implicating FES and PTPN6/SHP-1. In macrophages enhances LPS-induced MAPK phosphorylation and NF-kappaB activation and modulates LPS-induced cytokine secretion; involving ITSM 2. Positively regulates macroautophagy in primary dendritic cells via stabilization of IRF8; inhibits TRIM21-mediated proteasomal degradation of IRF8. The protein is SLAM family member 5 (Cd84) of Mus musculus (Mouse).